The chain runs to 677 residues: mRNA 3'-end-processing protein RNA14 (677 aa).

HAT repeat units follow at residues 56–88 (ESYAKVREVYEQFHNTFPFYSPAWTLQLKGELA), 90–124 (DEFETVEKILAQCLSGKLENNDLSLWSTYLDYIRR), 138–170 (VIVKAFQLVMQKCAIFEPKSSSFWNEYLNFLEQ), 181–214 (QRIDMLREFYKKMLCVPFDNLEKMWNRYTQWEQE), 257–289 (RTANKKNIPQPGTSDSNIQQLQIWLNWIKWERE), and 298–330 (MLSQRISYVYKQGIQYMIFSAEMWYDYSMYISE).

As to quaternary structure, component of the CFIA complex, which is composed of RNA14, RNA15, PCF11 and CLP1. Interacts with FIP1, PFS2, YSH1 and probably also with RNA15. Probably interacts with the phosphorylated CTD domain of RPB1/RNA polymerase II.

It is found in the nucleus. It localises to the cytoplasm. Functionally, component of the cleavage factor IA (CFIA) complex, which is involved in the endonucleolytic cleavage during polyadenylation-dependent pre-mRNA 3'-end formation and cooperates with the cleavage factor NAB4/CFIB and the cleavage and polyadenylation factor (CPF) complex. This is mRNA 3'-end-processing protein RNA14 (RNA14) from Saccharomyces cerevisiae (strain ATCC 204508 / S288c) (Baker's yeast).